A 265-amino-acid chain; its full sequence is Hydroxyethylthiazole kinase (265 aa).

M50 is a substrate binding site. ATP-binding residues include R125 and T171. Substrate is bound at residue G198.

This sequence belongs to the Thz kinase family. Mg(2+) is required as a cofactor.

The catalysed reaction is 5-(2-hydroxyethyl)-4-methylthiazole + ATP = 4-methyl-5-(2-phosphooxyethyl)-thiazole + ADP + H(+). It participates in cofactor biosynthesis; thiamine diphosphate biosynthesis; 4-methyl-5-(2-phosphoethyl)-thiazole from 5-(2-hydroxyethyl)-4-methylthiazole: step 1/1. Its function is as follows. Catalyzes the phosphorylation of the hydroxyl group of 4-methyl-5-beta-hydroxyethylthiazole (THZ). The protein is Hydroxyethylthiazole kinase of Salmonella paratyphi C (strain RKS4594).